We begin with the raw amino-acid sequence, 330 residues long: MPPNSVDKTNETEYLKDNHVDYEKLIAPQASPIKHKIVVMNVIRFSYLHIAGLYGLYLCFTSAKLATSVFAIVLFFLGNFGITAGAHRLWSHNGYKVKLPLEILLMVFNSIAFQNTIFTWVRDHRLHHKYTDTDADPHNATRGFFFSHIGWLLVRKHPMVKIAGKSLDMSDIYCNPLLRFQKKYAIPFIGTICFIIPTLAPMYFWGESLNNAWHITVLRYIFSLNGTFLVNSAAHLWGYKPYDKSLKATQSGMANAFTFGEGFHNYHHVFPWDYRADELGDRYINLTTRFIDFFAWMGWAYDLKTASTNIIEKRALRTGDGTYKRPNGMN.

The next 2 membrane-spanning stretches (helical) occupy residues 37 to 57 (IVVM…YGLY) and 65 to 85 (LATS…ITAG). A Histidine box-1 motif is present at residues 87–92 (HRLWSH). The helical transmembrane segment at 101-121 (LEILLMVFNSIAFQNTIFTWV) threads the bilayer. The Histidine box-2 signature appears at 124–128 (HRLHH). A run of 2 helical transmembrane segments spans residues 185–205 (AIPF…MYFW) and 216–238 (TVLR…HLWG). Positions 264–268 (HNYHH) match the Histidine box-3 motif.

This sequence belongs to the fatty acid desaturase type 1 family. Fe(2+) serves as cofactor. In terms of tissue distribution, highly expressed in the pheromone gland.

The protein resides in the membrane. It catalyses the reaction an 11,12-saturated fatty acyl-CoA + 2 Fe(II)-[cytochrome b5] + O2 + 2 H(+) = an (11Z)-Delta(11)-fatty acyl-CoA + 2 Fe(III)-[cytochrome b5] + 2 H2O. The catalysed reaction is (11Z)-hexadecenoyl-CoA + AH2 + O2 = (10E,12Z)-hexadecadienoyl-CoA + A + 2 H2O. Functionally, fatty acid desaturase that catalyzes 2 consecutive steps in the biosynthesis of bombykol, a sex pheromone produced by the moth. First acts as an acyl-CoA Delta(11) desaturase (1) by catalyzing the formation of Delta(11) fatty acyl precursors. Then acts as a (11Z)-hexadec-11-enoyl-CoA conjugase (2) by converting a single cis double bond at position 11 of (11Z)-hexadec-11-enoyl-CoA into conjugated 10 trans and 12 cis double bonds. The polypeptide is (11Z)-hexadec-11-enoyl-CoA conjugase (Bombyx mori (Silk moth)).